A 231-amino-acid polypeptide reads, in one-letter code: NADH-ubiquinone oxidoreductase chain 4 (231 aa).

The next 6 membrane-spanning stretches (helical) occupy residues P1 to I21, L34 to L54, S61 to I80, W84 to L106, V118 to L138, and L156 to L178.

This sequence belongs to the complex I subunit 4 family.

The protein localises to the mitochondrion membrane. It carries out the reaction a ubiquinone + NADH + 5 H(+)(in) = a ubiquinol + NAD(+) + 4 H(+)(out). Functionally, core subunit of the mitochondrial membrane respiratory chain NADH dehydrogenase (Complex I) that is believed to belong to the minimal assembly required for catalysis. Complex I functions in the transfer of electrons from NADH to the respiratory chain. The immediate electron acceptor for the enzyme is believed to be ubiquinone. The sequence is that of NADH-ubiquinone oxidoreductase chain 4 (MT-ND4) from Azemiops feae (Fea's viper).